We begin with the raw amino-acid sequence, 412 residues long: Palmitoyltransferase swf1 (412 aa).

Over 1–2 (MG) the chain is Lumenal. A helical transmembrane segment spans residues 3–23 (LLRTIALVILGFSAFIFTVLF). The Cytoplasmic segment spans residues 24 to 78 (GRLPVFRKTPIGLLHRIIWLHIPHGISYIDARLFNGRILRSWGQAGNYILYENHP). The helical transmembrane segment at 79 to 99 (LVLIFFTTILVIGELIFIPSA) threads the bilayer. The Lumenal segment spans residues 100-107 (WPRISVMH). A helical membrane pass occupies residues 108-128 (QLYIPIIIALPYYFLYVSVVT). Topologically, residues 129-198 (KSYITPDNHA…TNCVGLNNYH (70 aa)) are cytoplasmic. The DHHC domain occupies 155–205 (HSCETCHFLKPARSKHCSYCKRCVSRQDHHCIWLTNCVGLNNYHYFLYLLL). Residues 199–219 (YFLYLLLSLSVMLTYGSWLGY) traverse the membrane as a helical segment. Topologically, residues 220–265 (SLLSQTLDRLIPPSSPVRLRKQSWPTFLNMWAAVVAYDTRIGGVTM) are lumenal. The chain crosses the membrane as a helical span at residues 266–286 (LMFMTAPLAFAFLVYHVYLIW). Residues 287–412 (AGMTTNESAK…NYAAGKAHRA (126 aa)) are Cytoplasmic-facing.

Belongs to the DHHC palmitoyltransferase family. SWF1 subfamily.

The protein resides in the endoplasmic reticulum membrane. The enzyme catalyses L-cysteinyl-[protein] + hexadecanoyl-CoA = S-hexadecanoyl-L-cysteinyl-[protein] + CoA. Palmitoyltransferase that targets several endosomal SNAREs. Palmitoylates the SNAREs at cysteine residues close to the cytoplasmic end of their transmembrane domain. May have a role in the cellular quality control of transmembrane domain-containing proteins. The chain is Palmitoyltransferase swf1 (swf1) from Emericella nidulans (strain FGSC A4 / ATCC 38163 / CBS 112.46 / NRRL 194 / M139) (Aspergillus nidulans).